Here is a 352-residue protein sequence, read N- to C-terminus: Histidine biosynthesis bifunctional protein HisB (352 aa).

The tract at residues M1–A163 is histidinol-phosphatase. Residue D8 is the Nucleophile of the active site. Positions 8 and 10 each coordinate Mg(2+). The active-site Proton donor is D10. Positions 91, 93, 99, and 101 each coordinate Zn(2+). D128 contacts Mg(2+). Residues R164–L352 are imidazoleglycerol-phosphate dehydratase.

It in the N-terminal section; belongs to the histidinol-phosphatase family. This sequence in the C-terminal section; belongs to the imidazoleglycerol-phosphate dehydratase family. Mg(2+) is required as a cofactor. Zn(2+) serves as cofactor.

The protein resides in the cytoplasm. The catalysed reaction is D-erythro-1-(imidazol-4-yl)glycerol 3-phosphate = 3-(imidazol-4-yl)-2-oxopropyl phosphate + H2O. The enzyme catalyses L-histidinol phosphate + H2O = L-histidinol + phosphate. Its pathway is amino-acid biosynthesis; L-histidine biosynthesis; L-histidine from 5-phospho-alpha-D-ribose 1-diphosphate: step 6/9. It participates in amino-acid biosynthesis; L-histidine biosynthesis; L-histidine from 5-phospho-alpha-D-ribose 1-diphosphate: step 8/9. The polypeptide is Histidine biosynthesis bifunctional protein HisB (Legionella pneumophila subsp. pneumophila (strain Philadelphia 1 / ATCC 33152 / DSM 7513)).